The following is a 36-amino-acid chain: Kappa-theraphotoxin-Pg1b (36 aa).

3 disulfide bridges follow: Cys4–Cys19, Cys11–Cys24, and Cys18–Cys31.

It belongs to the neurotoxin 10 (Hwtx-1) family. 44 (Jztx-4) subfamily. Expressed by the venom gland.

Its subcellular location is the secreted. Its function is as follows. Gating modifier of Kv2.1/KCNB1, Kv2.2/KCNB2 and Kv4.3/KCND3 channels. This is Kappa-theraphotoxin-Pg1b from Chilobrachys guangxiensis (Chinese earth tiger tarantula).